We begin with the raw amino-acid sequence, 361 residues long: Tetraacyldisaccharide 4'-kinase (361 aa).

Residue T68–T75 coordinates ATP.

It belongs to the LpxK family.

The enzyme catalyses a lipid A disaccharide + ATP = a lipid IVA + ADP + H(+). Its pathway is glycolipid biosynthesis; lipid IV(A) biosynthesis; lipid IV(A) from (3R)-3-hydroxytetradecanoyl-[acyl-carrier-protein] and UDP-N-acetyl-alpha-D-glucosamine: step 6/6. Transfers the gamma-phosphate of ATP to the 4'-position of a tetraacyldisaccharide 1-phosphate intermediate (termed DS-1-P) to form tetraacyldisaccharide 1,4'-bis-phosphate (lipid IVA). This Pelobacter propionicus (strain DSM 2379 / NBRC 103807 / OttBd1) protein is Tetraacyldisaccharide 4'-kinase.